The primary structure comprises 275 residues: Adaptin ear-binding coat-associated protein 1 (275 aa).

The disordered stretch occupies residues A168–F275. The segment covering L187–S201 has biased composition (pro residues). Residue T211 is modified to Phosphothreonine. The segment covering S233 to S248 has biased composition (low complexity). 2 short sequence motifs (WXXF motif) span residues W252–F255 and W272–F275. Over residues S256–F275 the composition is skewed to polar residues.

This sequence belongs to the NECAP family. As to quaternary structure, interacts with AP1G1 and AP2A1 components of the adapter protein complexes AP-1 and AP-2. Interacts with the GAE domain proteins GGA1, GGA2 and GGA3. In terms of tissue distribution, expressed primarily in brain (at protein level).

The protein localises to the cytoplasmic vesicle. The protein resides in the clathrin-coated vesicle membrane. It localises to the cell membrane. Functionally, involved in endocytosis. This chain is Adaptin ear-binding coat-associated protein 1 (Necap1), found in Mus musculus (Mouse).